Reading from the N-terminus, the 179-residue chain is MKLIIGLGNPDPKYQKNRHNVGYMVVDKILENLRLKINKEKFSGIFVKTEEFIIAKPTTYMNLSGDFVKNISTYFKVSPNNILIIYDDMSYEVGQAAIKPKGGSNGQNGIKDILLKMNTEEIPRLKIGIGKNQEAAKHVLSDFTLEEFKIIDLVINQAAEAAISFLFNDIRIVMNSYNK.

Residue Y14 coordinates tRNA. H19 (proton acceptor) is an active-site residue. Y60, N62, and N108 together coordinate tRNA.

Belongs to the PTH family. As to quaternary structure, monomer.

It is found in the cytoplasm. It catalyses the reaction an N-acyl-L-alpha-aminoacyl-tRNA + H2O = an N-acyl-L-amino acid + a tRNA + H(+). In terms of biological role, hydrolyzes ribosome-free peptidyl-tRNAs (with 1 or more amino acids incorporated), which drop off the ribosome during protein synthesis, or as a result of ribosome stalling. Its function is as follows. Catalyzes the release of premature peptidyl moieties from peptidyl-tRNA molecules trapped in stalled 50S ribosomal subunits, and thus maintains levels of free tRNAs and 50S ribosomes. The sequence is that of Peptidyl-tRNA hydrolase from Mycoplasma mobile (strain ATCC 43663 / 163K / NCTC 11711) (Mesomycoplasma mobile).